The primary structure comprises 210 residues: Ribosomal RNA large subunit methyltransferase E (210 aa).

The S-adenosyl-L-methionine site is built by glycine 60, tryptophan 62, aspartate 80, aspartate 96, and aspartate 121. The Proton acceptor role is filled by lysine 161.

Belongs to the class I-like SAM-binding methyltransferase superfamily. RNA methyltransferase RlmE family.

The protein localises to the cytoplasm. It catalyses the reaction uridine(2552) in 23S rRNA + S-adenosyl-L-methionine = 2'-O-methyluridine(2552) in 23S rRNA + S-adenosyl-L-homocysteine + H(+). Its function is as follows. Specifically methylates the uridine in position 2552 of 23S rRNA at the 2'-O position of the ribose in the fully assembled 50S ribosomal subunit. This is Ribosomal RNA large subunit methyltransferase E from Vesicomyosocius okutanii subsp. Calyptogena okutanii (strain HA).